The chain runs to 114 residues: Cell division protein FtsB (114 aa).

Residues 1–3 lie on the Cytoplasmic side of the membrane; sequence MGK. Residues 4-21 traverse the membrane as a helical segment; it reads LTLLLVVLLGWLQYSLWV. The Periplasmic segment spans residues 22 to 114; sequence GKNGVHDYMR…ASYPSVTASH (93 aa). Positions 31 to 62 form a coiled coil; that stretch reads RVKQDVATQQANNAKLKSRNDQLFAEIDDLNG.

It belongs to the FtsB family. As to quaternary structure, part of a complex composed of FtsB, FtsL and FtsQ.

Its subcellular location is the cell inner membrane. In terms of biological role, essential cell division protein. May link together the upstream cell division proteins, which are predominantly cytoplasmic, with the downstream cell division proteins, which are predominantly periplasmic. The polypeptide is Cell division protein FtsB (Edwardsiella ictaluri (strain 93-146)).